The primary structure comprises 176 residues: NAD(P)H-quinone oxidoreductase subunit 6, chloroplastic (176 aa).

5 consecutive transmembrane segments (helical) span residues 10–30 (FLLV…VLLP), 32–52 (PIFS…LYIL), 61–81 (AQLL…VMFM), 92–112 (LWTV…FLLM), and 152–172 (FFLP…GAIS).

It belongs to the complex I subunit 6 family. As to quaternary structure, NDH is composed of at least 16 different subunits, 5 of which are encoded in the nucleus.

It localises to the plastid. It is found in the chloroplast thylakoid membrane. It catalyses the reaction a plastoquinone + NADH + (n+1) H(+)(in) = a plastoquinol + NAD(+) + n H(+)(out). The enzyme catalyses a plastoquinone + NADPH + (n+1) H(+)(in) = a plastoquinol + NADP(+) + n H(+)(out). In terms of biological role, NDH shuttles electrons from NAD(P)H:plastoquinone, via FMN and iron-sulfur (Fe-S) centers, to quinones in the photosynthetic chain and possibly in a chloroplast respiratory chain. The immediate electron acceptor for the enzyme in this species is believed to be plastoquinone. Couples the redox reaction to proton translocation, and thus conserves the redox energy in a proton gradient. This is NAD(P)H-quinone oxidoreductase subunit 6, chloroplastic (ndhG) from Capsella bursa-pastoris (Shepherd's purse).